Consider the following 266-residue polypeptide: Type II iodothyronine deiodinase (266 aa).

Over 1 to 9 (MGLLSVDLL) the chain is Lumenal. The helical; Signal-anchor for type III membrane protein transmembrane segment at 10 to 34 (ITLQILPVFFSNCLFLALYDSVILL) threads the bilayer. Topologically, residues 35-266 (KHVALLLSRS…KNFSKRUILD (232 aa)) are cytoplasmic. Residue Sec130 is part of the active site. Residues Sec130 and Sec263 are each a non-standard amino acid (selenocysteine).

It belongs to the iodothyronine deiodinase family. As to quaternary structure, predominantly monomer. Can form homodimers but homodimerization is not essential for enzyme activity. Interacts with USP20 and USP33. Interacts with MARCHF6. Post-translationally, ubiquitinated by MARCHF6, leading to its degradation by the proteasome. Deubiquitinated by USP20 and USP33. In terms of tissue distribution, expressed in mammary gland and in brain.

Its subcellular location is the endoplasmic reticulum membrane. It catalyses the reaction 3,3',5-triiodo-L-thyronine + iodide + A + H(+) = L-thyroxine + AH2. The enzyme catalyses 3,3'-diiodo-L-thyronine + iodide + A + H(+) = 3,3',5'-triiodo-L-thyronine + AH2. The catalysed reaction is 3'-iodo-L-thyronine + iodide + A + H(+) = 3',5'-diiodo-L-thyronine + AH2. It carries out the reaction 3,3'-diiodothyronamine + iodide + A + H(+) = 3,3',5'-triiodothyronamine + AH2. It catalyses the reaction 3'-iodothyronamine + iodide + A + H(+) = 3',5'-diiodothyronamine + AH2. Its function is as follows. Plays a crucial role in the metabolism of thyroid hormones (TH) and has specific roles in TH activation and inactivation by deiodination. Catalyzes the deiodination of L-thyroxine (T4) to 3,5,3'-triiodothyronine (T3) and 3,3',5'-triiodothyronine (rT3) to 3,3'-diiodothyronine (3,3'-T2) via outer-ring deiodination (ORD). Catalyzes the deiodination of 3',5'-diiodothyronine (3',5'-T2) to 3'-monoiodothyronine (3'-T1) via ORD. Catalyzes the phenolic ring deiodinations of 3,3',5'-triiodothyronamine and 3',5'- diiodothyronamine. This chain is Type II iodothyronine deiodinase (Dio2), found in Mus musculus (Mouse).